The following is a 225-amino-acid chain: Imidazole glycerol phosphate synthase subunit HisH (225 aa).

A Glutamine amidotransferase type-1 domain is found at 5–220 (KNVIVDTGCA…LELDSTELNQ (216 aa)). The active-site Nucleophile is the cysteine 80. Catalysis depends on residues histidine 195 and glutamate 197.

In terms of assembly, heterodimer of HisH and HisF.

The protein localises to the cytoplasm. The catalysed reaction is 5-[(5-phospho-1-deoxy-D-ribulos-1-ylimino)methylamino]-1-(5-phospho-beta-D-ribosyl)imidazole-4-carboxamide + L-glutamine = D-erythro-1-(imidazol-4-yl)glycerol 3-phosphate + 5-amino-1-(5-phospho-beta-D-ribosyl)imidazole-4-carboxamide + L-glutamate + H(+). The enzyme catalyses L-glutamine + H2O = L-glutamate + NH4(+). Its pathway is amino-acid biosynthesis; L-histidine biosynthesis; L-histidine from 5-phospho-alpha-D-ribose 1-diphosphate: step 5/9. Functionally, IGPS catalyzes the conversion of PRFAR and glutamine to IGP, AICAR and glutamate. The HisH subunit catalyzes the hydrolysis of glutamine to glutamate and ammonia as part of the synthesis of IGP and AICAR. The resulting ammonia molecule is channeled to the active site of HisF. This chain is Imidazole glycerol phosphate synthase subunit HisH, found in Colwellia psychrerythraea (strain 34H / ATCC BAA-681) (Vibrio psychroerythus).